The sequence spans 282 residues: Parvulin-like PPIase (282 aa).

The first 20 residues, 1–20 (MKKLSVIFLSVSMLSSIAFG), serve as a signal peptide directing secretion. In terms of domain architecture, PpiC spans 138–231 (KEQIKVAHIL…FGWHIIKVLE (94 aa)).

It belongs to the PpiC/parvulin rotamase family.

Its subcellular location is the cell outer membrane. The catalysed reaction is [protein]-peptidylproline (omega=180) = [protein]-peptidylproline (omega=0). The sequence is that of Parvulin-like PPIase (plp) from Rickettsia prowazekii (strain Madrid E).